A 119-amino-acid chain; its full sequence is Large ribosomal subunit protein bL20 (119 aa).

It belongs to the bacterial ribosomal protein bL20 family.

In terms of biological role, binds directly to 23S ribosomal RNA and is necessary for the in vitro assembly process of the 50S ribosomal subunit. It is not involved in the protein synthesizing functions of that subunit. This Xylella fastidiosa (strain M12) protein is Large ribosomal subunit protein bL20.